A 237-amino-acid chain; its full sequence is UPF0280 protein Mthe_1297 (237 aa).

This sequence belongs to the UPF0280 family.

This is UPF0280 protein Mthe_1297 from Methanothrix thermoacetophila (strain DSM 6194 / JCM 14653 / NBRC 101360 / PT) (Methanosaeta thermophila).